Here is a 72-residue protein sequence, read N- to C-terminus: Translation initiation factor IF-1 (72 aa).

Residues 1-72 (MAKDDVIEVD…DKGRITYRHK (72 aa)) enclose the S1-like domain.

Belongs to the IF-1 family. As to quaternary structure, component of the 30S ribosomal translation pre-initiation complex which assembles on the 30S ribosome in the order IF-2 and IF-3, IF-1 and N-formylmethionyl-tRNA(fMet); mRNA recruitment can occur at any time during PIC assembly.

The protein localises to the cytoplasm. Its function is as follows. One of the essential components for the initiation of protein synthesis. Stabilizes the binding of IF-2 and IF-3 on the 30S subunit to which N-formylmethionyl-tRNA(fMet) subsequently binds. Helps modulate mRNA selection, yielding the 30S pre-initiation complex (PIC). Upon addition of the 50S ribosomal subunit IF-1, IF-2 and IF-3 are released leaving the mature 70S translation initiation complex. This chain is Translation initiation factor IF-1, found in Helicobacter hepaticus (strain ATCC 51449 / 3B1).